A 395-amino-acid polypeptide reads, in one-letter code: Phosphoglycerate kinase (395 aa).

Substrate-binding positions include 21 to 23 (DIN), arginine 36, 59 to 62 (HFGR), arginine 114, and arginine 147. Residues lysine 197, glutamate 322, and 352-355 (GGDT) contribute to the ATP site.

It belongs to the phosphoglycerate kinase family. In terms of assembly, monomer.

Its subcellular location is the cytoplasm. The enzyme catalyses (2R)-3-phosphoglycerate + ATP = (2R)-3-phospho-glyceroyl phosphate + ADP. Its pathway is carbohydrate degradation; glycolysis; pyruvate from D-glyceraldehyde 3-phosphate: step 2/5. This Roseobacter denitrificans (strain ATCC 33942 / OCh 114) (Erythrobacter sp. (strain OCh 114)) protein is Phosphoglycerate kinase.